The chain runs to 263 residues: Ribosomal RNA small subunit methyltransferase A (263 aa).

S-adenosyl-L-methionine is bound by residues Ile-18, Gly-43, Glu-65, Asp-91, and Asn-110.

This sequence belongs to the class I-like SAM-binding methyltransferase superfamily. rRNA adenine N(6)-methyltransferase family. RsmA subfamily.

The protein resides in the cytoplasm. The catalysed reaction is adenosine(1518)/adenosine(1519) in 16S rRNA + 4 S-adenosyl-L-methionine = N(6)-dimethyladenosine(1518)/N(6)-dimethyladenosine(1519) in 16S rRNA + 4 S-adenosyl-L-homocysteine + 4 H(+). Functionally, specifically dimethylates two adjacent adenosines (A1518 and A1519) in the loop of a conserved hairpin near the 3'-end of 16S rRNA in the 30S particle. May play a critical role in biogenesis of 30S subunits. The sequence is that of Ribosomal RNA small subunit methyltransferase A from Ehrlichia chaffeensis (strain ATCC CRL-10679 / Arkansas).